The primary structure comprises 334 residues: Ketol-acid reductoisomerase (NADP(+)) (334 aa).

A KARI N-terminal Rossmann domain is found at 1–181; the sequence is MNIYYDKNAD…GGGRTGILET (181 aa). NADP(+) contacts are provided by residues 24-27, Arg47, Ser50, Ser52, and 82-85; these read YGSQ and DEFQ. His107 is a catalytic residue. An NADP(+)-binding site is contributed by Gly133. The region spanning 182–323 is the KARI C-terminal knotted domain; sequence SFKDETETDL…ESLRSMMPWI (142 aa). Residues Asp190, Glu194, Glu226, and Glu230 each coordinate Mg(2+). Ser251 provides a ligand contact to substrate.

Belongs to the ketol-acid reductoisomerase family. Mg(2+) is required as a cofactor.

It catalyses the reaction (2R)-2,3-dihydroxy-3-methylbutanoate + NADP(+) = (2S)-2-acetolactate + NADPH + H(+). The enzyme catalyses (2R,3R)-2,3-dihydroxy-3-methylpentanoate + NADP(+) = (S)-2-ethyl-2-hydroxy-3-oxobutanoate + NADPH + H(+). It participates in amino-acid biosynthesis; L-isoleucine biosynthesis; L-isoleucine from 2-oxobutanoate: step 2/4. Its pathway is amino-acid biosynthesis; L-valine biosynthesis; L-valine from pyruvate: step 2/4. Involved in the biosynthesis of branched-chain amino acids (BCAA). Catalyzes an alkyl-migration followed by a ketol-acid reduction of (S)-2-acetolactate (S2AL) to yield (R)-2,3-dihydroxy-isovalerate. In the isomerase reaction, S2AL is rearranged via a Mg-dependent methyl migration to produce 3-hydroxy-3-methyl-2-ketobutyrate (HMKB). In the reductase reaction, this 2-ketoacid undergoes a metal-dependent reduction by NADPH to yield (R)-2,3-dihydroxy-isovalerate. This Vesicomyosocius okutanii subsp. Calyptogena okutanii (strain HA) protein is Ketol-acid reductoisomerase (NADP(+)).